The following is a 168-amino-acid chain: Peptide deformylase (168 aa).

Residues C92 and H134 each coordinate Fe cation. Residue E135 is part of the active site. H138 serves as a coordination point for Fe cation.

This sequence belongs to the polypeptide deformylase family. It depends on Fe(2+) as a cofactor.

It catalyses the reaction N-terminal N-formyl-L-methionyl-[peptide] + H2O = N-terminal L-methionyl-[peptide] + formate. In terms of biological role, removes the formyl group from the N-terminal Met of newly synthesized proteins. Requires at least a dipeptide for an efficient rate of reaction. N-terminal L-methionine is a prerequisite for activity but the enzyme has broad specificity at other positions. The sequence is that of Peptide deformylase from Azotobacter vinelandii (strain DJ / ATCC BAA-1303).